Here is a 635-residue protein sequence, read N- to C-terminus: tRNA 5-methylaminomethyl-2-thiouridine biosynthesis bifunctional protein MnmC (635 aa).

Residues methionine 1–leucine 231 form a tRNA (mnm(5)s(2)U34)-methyltransferase region. Residues isoleucine 249 to aspartate 635 are FAD-dependent cmnm(5)s(2)U34 oxidoreductase.

This sequence in the N-terminal section; belongs to the methyltransferase superfamily. tRNA (mnm(5)s(2)U34)-methyltransferase family. It in the C-terminal section; belongs to the DAO family. FAD serves as cofactor.

The protein resides in the cytoplasm. The enzyme catalyses 5-aminomethyl-2-thiouridine(34) in tRNA + S-adenosyl-L-methionine = 5-methylaminomethyl-2-thiouridine(34) in tRNA + S-adenosyl-L-homocysteine + H(+). Catalyzes the last two steps in the biosynthesis of 5-methylaminomethyl-2-thiouridine (mnm(5)s(2)U) at the wobble position (U34) in tRNA. Catalyzes the FAD-dependent demodification of cmnm(5)s(2)U34 to nm(5)s(2)U34, followed by the transfer of a methyl group from S-adenosyl-L-methionine to nm(5)s(2)U34, to form mnm(5)s(2)U34. This is tRNA 5-methylaminomethyl-2-thiouridine biosynthesis bifunctional protein MnmC from Azoarcus sp. (strain BH72).